Here is a 592-residue protein sequence, read N- to C-terminus: Proteasome-associated ATPase (592 aa).

A compositionally biased stretch (acidic residues) spans 1 to 11 (MTGYDSSEEAE). The disordered stretch occupies residues 1-24 (MTGYDSSEEAERDSSPADGYRQTP). Residues 25–99 (AQLSAQIRVL…LKEEVDRLAQ (75 aa)) adopt a coiled-coil conformation. Residue 281–286 (GCGKTL) coordinates ATP. A docks into pockets in the proteasome alpha-ring region spans residues 591 to 592 (YL).

The protein belongs to the AAA ATPase family. In terms of assembly, homohexamer. Assembles into a hexameric ring structure that caps the 20S proteasome core. Strongly interacts with the prokaryotic ubiquitin-like protein Pup through a hydrophobic interface; the interacting region of ARC lies in its N-terminal coiled-coil domain. There is one Pup binding site per ARC hexamer ring. Upon ATP-binding, the C-terminus of ARC interacts with the alpha-rings of the proteasome core, possibly by binding to the intersubunit pockets.

Its pathway is protein degradation; proteasomal Pup-dependent pathway. ATPase which is responsible for recognizing, binding, unfolding and translocation of pupylated proteins into the bacterial 20S proteasome core particle. May be essential for opening the gate of the 20S proteasome via an interaction with its C-terminus, thereby allowing substrate entry and access to the site of proteolysis. Thus, the C-termini of the proteasomal ATPase may function like a 'key in a lock' to induce gate opening and therefore regulate proteolysis. This Nakamurella multipartita (strain ATCC 700099 / DSM 44233 / CIP 104796 / JCM 9543 / NBRC 105858 / Y-104) (Microsphaera multipartita) protein is Proteasome-associated ATPase.